We begin with the raw amino-acid sequence, 836 residues long: V-type proton ATPase subunit C (836 aa).

A compositionally biased stretch (basic residues) spans 116 to 144; that stretch reads LSLRHQRKHQHTHHQNKPQHYHHHHHHHQ. Disordered stretches follow at residues 116-169, 302-403, 415-453, and 496-544; these read LSLR…ASAP, APTT…SVQS, KPKRNSKKSSAQQQHETAQLQHQQTTQQHATPLTPQNHN, and PSQL…PLSP. Residues 160–169 are compositionally biased toward pro residues; that stretch reads ATPPAPASAP. Residues 302-316 are compositionally biased toward low complexity; sequence APTTSSSVHSSMSRS. Polar residues-rich tracts occupy residues 319 to 348 and 364 to 374; these read KRLNNNTCSINNNKLSFRSGSHVSQLHLAT and TNPLQSPVQKS. Positions 425-450 are enriched in low complexity; the sequence is AQQQHETAQLQHQQTTQQHATPLTPQ. The segment covering 496 to 511 has biased composition (polar residues); that stretch reads PSQLNINNGFNLTPTH. A compositionally biased stretch (low complexity) spans 512–529; sequence RSSPVSSCCGSSSQGRSS.

The protein belongs to the V-ATPase C subunit family. V-ATPase is a heteromultimeric enzyme made up of two complexes: the ATP-hydrolytic V1 complex and the proton translocation V0 complex. The V1 complex consists of three catalytic AB heterodimers that form a heterohexamer, three peripheral stalks each consisting of EG heterodimers, one central rotor including subunits D and F, and the regulatory subunits C and H. The proton translocation complex V0 consists of the proton transport subunit a, a ring of proteolipid subunits c9c'', rotary subunit d, subunits e and f, and the accessory subunits VhaAC45 and ATP6AP2. In terms of tissue distribution, in larvae, expressed in the ring gland, CNS, imaginal disks and lymph gland.

Subunit of the V1 complex of vacuolar(H+)-ATPase (V-ATPase), a multisubunit enzyme composed of a peripheral complex (V1) that hydrolyzes ATP and a membrane integral complex (V0) that translocates protons. V-ATPase is responsible for acidifying and maintaining the pH of intracellular compartments and in some cell types, is targeted to the plasma membrane, where it is responsible for acidifying the extracellular environment. Subunit C is necessary for the assembly of the catalytic sector of the enzyme and is likely to have a specific function in its catalytic activity. In enterocytes, acts as part of a pHCl-2 sensory pathway which mediates Tor-dependent larval growth and metabolism in response to zinc availability. Likely acts in maintaining enterocyte lysosomal acidification which consequently promotes Tor activation at the lysosome membrane. In Drosophila melanogaster (Fruit fly), this protein is V-type proton ATPase subunit C (Vha44).